The chain runs to 165 residues: SsrA-binding protein (165 aa).

Belongs to the SmpB family.

The protein resides in the cytoplasm. Functionally, required for rescue of stalled ribosomes mediated by trans-translation. Binds to transfer-messenger RNA (tmRNA), required for stable association of tmRNA with ribosomes. tmRNA and SmpB together mimic tRNA shape, replacing the anticodon stem-loop with SmpB. tmRNA is encoded by the ssrA gene; the 2 termini fold to resemble tRNA(Ala) and it encodes a 'tag peptide', a short internal open reading frame. During trans-translation Ala-aminoacylated tmRNA acts like a tRNA, entering the A-site of stalled ribosomes, displacing the stalled mRNA. The ribosome then switches to translate the ORF on the tmRNA; the nascent peptide is terminated with the 'tag peptide' encoded by the tmRNA and targeted for degradation. The ribosome is freed to recommence translation, which seems to be the essential function of trans-translation. This is SsrA-binding protein from Parvibaculum lavamentivorans (strain DS-1 / DSM 13023 / NCIMB 13966).